Here is a 133-residue protein sequence, read N- to C-terminus: Basic phospholipase A2 beta-bungarotoxin A-AL2 chain (133 aa).

The first 5 residues, phenylalanine 1–alanine 5, serve as a signal peptide directing secretion. A propeptide spanning residues alanine 6–leucine 13 is cleaved from the precursor. 6 disulfide bridges follow: cysteine 40/cysteine 132, cysteine 42/cysteine 58, cysteine 57/cysteine 113, cysteine 64/cysteine 106, cysteine 74/cysteine 99, and cysteine 92/cysteine 104. Ca(2+) contacts are provided by tyrosine 41, glycine 43, and glycine 45. Histidine 61 is a catalytic residue. Ca(2+) is bound at residue aspartate 62. Residue aspartate 107 is part of the active site.

The protein belongs to the phospholipase A2 family. Group I subfamily. D49 sub-subfamily. In terms of assembly, heterodimer; disulfide-linked. The A chains have phospholipase A2 activity and the B chains show homology with the basic protease inhibitors. Requires Ca(2+) as cofactor. As to expression, expressed by the venom gland.

Its subcellular location is the secreted. It carries out the reaction a 1,2-diacyl-sn-glycero-3-phosphocholine + H2O = a 1-acyl-sn-glycero-3-phosphocholine + a fatty acid + H(+). In terms of biological role, snake venom phospholipase A2 (PLA2) that inhibits neuromuscular transmission by blocking acetylcholine release from the nerve termini. PLA2 catalyzes the calcium-dependent hydrolysis of the 2-acyl groups in 3-sn-phosphoglycerides. In Bungarus multicinctus (Many-banded krait), this protein is Basic phospholipase A2 beta-bungarotoxin A-AL2 chain.